We begin with the raw amino-acid sequence, 103 residues long: Large ribosomal subunit protein uL24 (103 aa).

Belongs to the universal ribosomal protein uL24 family. Part of the 50S ribosomal subunit.

In terms of biological role, one of two assembly initiator proteins, it binds directly to the 5'-end of the 23S rRNA, where it nucleates assembly of the 50S subunit. One of the proteins that surrounds the polypeptide exit tunnel on the outside of the subunit. The chain is Large ribosomal subunit protein uL24 from Mannheimia succiniciproducens (strain KCTC 0769BP / MBEL55E).